The primary structure comprises 1220 residues: DNA polymerase catalytic subunit (1220 aa).

Belongs to the DNA polymerase type-B family. As to quaternary structure, forms a complex with the ssDNA-binding protein, the DNA polymerase processivity factor, and the alkaline exonuclease. Interacts with the helicase-primase complex composed of the primase, the helicase and the primase-associated factor; this interaction may coordinate leading and lagging strand DNA synthesis at the replication fork.

It is found in the host nucleus. It carries out the reaction DNA(n) + a 2'-deoxyribonucleoside 5'-triphosphate = DNA(n+1) + diphosphate. It catalyses the reaction Endonucleolytic cleavage to 5'-phosphomonoester.. Replicates viral genomic DNA. The replication complex is composed of six viral proteins: the DNA polymerase, processivity factor, primase, primase-associated factor, helicase, and ssDNA-binding protein. Additionally, the polymerase contains an intrinsic ribonuclease H (RNase H) activity that specifically degrades RNA/DNA heteroduplexes or duplex DNA substrates in the 5' to 3' direction. Therefore, it can catalyze the excision of the RNA primers that initiate the synthesis of Okazaki fragments at a replication fork during viral DNA replication. The chain is DNA polymerase catalytic subunit (MDV043) from Gallid herpesvirus 2 (strain Chicken/Md5/ATCC VR-987) (GaHV-2).